The chain runs to 1033 residues: RNA cytidine acetyltransferase (1033 aa).

Residues 285–294 (GRGKSAALGL) and arginine 465 each bind ATP. The region spanning 560-694 (VDLKNPKLPD…IHVRDAKTMP (135 aa)) is the N-acetyltransferase domain. Acetyl-CoA contacts are provided by residues 626–628 (IAV), 633–639 (VKMGYGT), and arginine 727. The tract at residues 988-1033 (ENQIQKTNGKGARVVSIKGEKRKNNSLDASDKKTKEKPSSKKKFRK) is disordered. Basic and acidic residues predominate over residues 1005-1026 (KGEKRKNNSLDASDKKTKEKPS).

Belongs to the RNA cytidine acetyltransferase family. NAT10 subfamily. As to quaternary structure, interacts with tan1.

Its subcellular location is the nucleus. The protein localises to the nucleolus. It catalyses the reaction a cytidine in 18S rRNA + acetyl-CoA + ATP + H2O = an N(4)-acetylcytidine in 18S rRNA + ADP + phosphate + CoA + H(+). It carries out the reaction a cytidine in tRNA + acetyl-CoA + ATP + H2O = an N(4)-acetylcytidine in tRNA + ADP + phosphate + CoA + H(+). RNA cytidine acetyltransferase with specificity toward both 18S rRNA and tRNAs. Catalyzes the formation of N(4)-acetylcytidine (ac4C) at positions 1297 and 1815 in 18S rRNA. Required for early nucleolar cleavages of precursor rRNA at sites A0, A1 and A2 during 18S rRNA synthesis. Catalyzes the formation of ac4C in serine and leucine tRNAs. Requires the tRNA-binding adapter protein tan1 for full tRNA acetyltransferase activity but not for 18S rRNA acetylation. This chain is RNA cytidine acetyltransferase, found in Schizosaccharomyces pombe (strain 972 / ATCC 24843) (Fission yeast).